A 400-amino-acid chain; its full sequence is Formate-dependent phosphoribosylglycinamide formyltransferase (400 aa).

N(1)-(5-phospho-beta-D-ribosyl)glycinamide contacts are provided by residues E22 to L23 and E82. ATP contacts are provided by residues R114, K155, S160 to Q165, E195 to V198, and E203. Residues R119–L308 enclose the ATP-grasp domain. Residues E267 and E279 each contribute to the Mg(2+) site. Residues D286, K356, and R363–R364 each bind N(1)-(5-phospho-beta-D-ribosyl)glycinamide.

This sequence belongs to the PurK/PurT family. Homodimer.

The catalysed reaction is N(1)-(5-phospho-beta-D-ribosyl)glycinamide + formate + ATP = N(2)-formyl-N(1)-(5-phospho-beta-D-ribosyl)glycinamide + ADP + phosphate + H(+). It functions in the pathway purine metabolism; IMP biosynthesis via de novo pathway; N(2)-formyl-N(1)-(5-phospho-D-ribosyl)glycinamide from N(1)-(5-phospho-D-ribosyl)glycinamide (formate route): step 1/1. Its function is as follows. Involved in the de novo purine biosynthesis. Catalyzes the transfer of formate to 5-phospho-ribosyl-glycinamide (GAR), producing 5-phospho-ribosyl-N-formylglycinamide (FGAR). Formate is provided by PurU via hydrolysis of 10-formyl-tetrahydrofolate. This is Formate-dependent phosphoribosylglycinamide formyltransferase from Hahella chejuensis (strain KCTC 2396).